The primary structure comprises 451 residues: Tubulin alpha-1 chain (451 aa).

Glutamine 11 is a binding site for GTP. Lysine 40 is subject to N6-acetyllysine. Positions 71, 144, 145, 179, 206, and 228 each coordinate GTP. Glutamate 71 serves as a coordination point for Mg(2+). Residue glutamate 254 is part of the active site.

This sequence belongs to the tubulin family. Dimer of alpha and beta chains. A typical microtubule is a hollow water-filled tube with an outer diameter of 25 nm and an inner diameter of 15 nM. Alpha-beta heterodimers associate head-to-tail to form protofilaments running lengthwise along the microtubule wall with the beta-tubulin subunit facing the microtubule plus end conferring a structural polarity. Microtubules usually have 13 protofilaments but different protofilament numbers can be found in some organisms and specialized cells. Mg(2+) serves as cofactor. Post-translationally, undergoes a tyrosination/detyrosination cycle, the cyclic removal and re-addition of a C-terminal tyrosine residue by the enzymes tubulin tyrosine carboxypeptidase (TTCP) and tubulin tyrosine ligase (TTL), respectively. In terms of processing, acetylation of alpha chains at Lys-40 stabilizes microtubules and affects affinity and processivity of microtubule motors. This modification has a role in multiple cellular functions, ranging from cell motility, cell cycle progression or cell differentiation to intracellular trafficking and signaling.

It is found in the cytoplasm. It localises to the cytoskeleton. It carries out the reaction GTP + H2O = GDP + phosphate + H(+). Its function is as follows. Tubulin is the major constituent of microtubules, a cylinder consisting of laterally associated linear protofilaments composed of alpha- and beta-tubulin heterodimers. Microtubules grow by the addition of GTP-tubulin dimers to the microtubule end, where a stabilizing cap forms. Below the cap, tubulin dimers are in GDP-bound state, owing to GTPase activity of alpha-tubulin. This is Tubulin alpha-1 chain (TUBA1) from Zea mays (Maize).